Here is an 889-residue protein sequence, read N- to C-terminus: Low-affinity potassium transport protein (889 aa).

The Cytoplasmic portion of the chain corresponds to 1 to 51 (MPTAKRTSSRASLALPFQLRLVHKKSWGHRLRDFISGFLKSCRPIAKYVFP). A helical transmembrane segment spans residues 52–73 (NFIVVHYIYLITLSIIGSILLY). The Extracellular portion of the chain corresponds to 74-80 (PCKNTAF). Residues 81-101 (IDVLFLAAGASTQGGLATKST) form a helical membrane-spanning segment. Over 102 to 109 (NDFNLYQQ) the chain is Cytoplasmic. A helical membrane pass occupies residues 110–130 (IVVYVITLLSTPILIHGFLAF). The Extracellular portion of the chain corresponds to 131–464 (VRLYWFERYF…EYRALRLLCC (334 aa)). The segment at 189 to 244 (REDPRQSASDVPMDSPDTSALSSISPLNVSSSKEESSDTQSSPPNFSSKRQPSDVD) is disordered. Positions 207–219 (SALSSISPLNVSS) are enriched in low complexity. Residues asparagine 216, asparagine 233, and asparagine 265 are each glycosylated (N-linked (GlcNAc...) asparagine). A helical transmembrane segment spans residues 465-487 (ILMVYYIGFNILAFVTIVPWACT). Topologically, residues 488 to 499 (RHHYSEIIRRNG) are cytoplasmic. A helical transmembrane segment spans residues 500-521 (VSPTWWGFFTAMSAFSNLGLSL). The Extracellular portion of the chain corresponds to 522–524 (TAD). A helical membrane pass occupies residues 525-545 (SMVSFDTAPYPLIFMMFFIII). Over 546-548 (GNT) the chain is Cytoplasmic. Residues 549–569 (GFPIMLRFIIWIMFKTSRDLS) traverse the membrane as a helical segment. At 570 to 584 (QFKESLGFLLDHPRR) the chain is on the extracellular side. A helical transmembrane segment spans residues 585–605 (CFTLLFPSGPTWWLFTTLVVL). Over 606 to 609 (NATD) the chain is Cytoplasmic. Residues 610-630 (WILFIILDFNSAVVRQVAKGY) form a helical membrane-spanning segment. The Extracellular segment spans residues 631-657 (RALMGLFQSVCTRTAGFNVVDLSKLHP). Residues 658–678 (SIQVSYMLMMYVSVLPLAISI) form a helical membrane-spanning segment. Topologically, residues 679 to 743 (RRTNVYEEQS…KSFVGAHLRR (65 aa)) are cytoplasmic. Residues 705–733 (DDIKETDHDGESEERDTVSTKSKPKKQSP) are disordered. The chain crosses the membrane as a helical span at residues 744–764 (QLSFDLWYLFLGLFIICICEG). Topologically, residues 765 to 776 (RKIEDVNKPDFN) are extracellular. Residues 777-797 (VFAILFEVVSAYGTVGLSLGY) traverse the membrane as a helical segment. Residues 798–889 (PNTNTSLSAQ…KIATKFWGKH (92 aa)) are Cytoplasmic-facing.

Belongs to the TrkH potassium transport family.

The protein resides in the membrane. Functionally, this protein is required for low-affinity potassium transport. This chain is Low-affinity potassium transport protein (TRK2), found in Saccharomyces cerevisiae (strain ATCC 204508 / S288c) (Baker's yeast).